We begin with the raw amino-acid sequence, 400 residues long: MSNKLVLVLNCGSSSLKFAVIDAQTGDDQISGLAECFGLEDSRIKWKINGEKQEAALGAFTAHREAVEFIVNKILAGQPELAAQIQAVGHRIVHGGEKFTRSVIIDDSVIKGIEDCASLAPLHNPAHLIGIRAAMASFPKLPQVAVFDTAFHQSMPDRAYVYALPYKLYREHGIRRYGMHGTSHLFVSREAAKMLNKPLAETNVICAHLGNGASVTAVKGGKSVDTSMGLTPLEGLVMGTRCGDIDPSIIYHLVHQLGYTLEEVNNLMNKQSGLLGISELTNDCRGIEEGYADGHKGATLALEIFCYRLAKYIASYTVPLGRLDAVVFTGGIGENSDLIREKVLNLLEIFNFHVDSERNKAARFGKKGIITQDNSTVAMVIPTNEEWVIAEDSIKLINKE.

Asn-10 is a Mg(2+) binding site. Position 17 (Lys-17) interacts with ATP. Arg-91 lines the substrate pocket. The active-site Proton donor/acceptor is the Asp-148. ATP contacts are provided by residues 208 to 212 (HLGNG), 283 to 285 (DCR), and 331 to 335 (GIGEN). Glu-385 contacts Mg(2+).

It belongs to the acetokinase family. In terms of assembly, homodimer. It depends on Mg(2+) as a cofactor. Mn(2+) serves as cofactor.

It localises to the cytoplasm. The catalysed reaction is acetate + ATP = acetyl phosphate + ADP. It functions in the pathway metabolic intermediate biosynthesis; acetyl-CoA biosynthesis; acetyl-CoA from acetate: step 1/2. Its function is as follows. Catalyzes the formation of acetyl phosphate from acetate and ATP. Can also catalyze the reverse reaction. In Shewanella putrefaciens (strain CN-32 / ATCC BAA-453), this protein is Acetate kinase.